Reading from the N-terminus, the 197-residue chain is Potassium-transporting ATPase KdpC subunit (197 aa).

The chain crosses the membrane as a helical span at residues 7–27; sequence PAFISLILFTLLFGLIYPLTV.

Belongs to the KdpC family. The system is composed of three essential subunits: KdpA, KdpB and KdpC.

It is found in the cell inner membrane. Its function is as follows. Part of the high-affinity ATP-driven potassium transport (or Kdp) system, which catalyzes the hydrolysis of ATP coupled with the electrogenic transport of potassium into the cytoplasm. This subunit acts as a catalytic chaperone that increases the ATP-binding affinity of the ATP-hydrolyzing subunit KdpB by the formation of a transient KdpB/KdpC/ATP ternary complex. This Beijerinckia indica subsp. indica (strain ATCC 9039 / DSM 1715 / NCIMB 8712) protein is Potassium-transporting ATPase KdpC subunit.